The sequence spans 188 residues: Pterocarpan synthase 1 (188 aa).

Residues 1–23 (MAKSTTFFISLTLPFLLLSVVTA) form the signal peptide. A glycan (N-linked (GlcNAc...) asparagine) is linked at N127.

It belongs to the plant dirigent protein family. In terms of assembly, homodimer.

The protein resides in the secreted. Its subcellular location is the extracellular space. It localises to the apoplast. The enzyme catalyses a (4R)-4,2'-dihydroxyisoflavan = a pterocarpan + H2O.. The catalysed reaction is (3R,4R)-7,2'-dihydroxy-4'-methoxyisoflavanol = (-)-medicarpin + H2O. It carries out the reaction (3S,4R)-7,2'-dihydroxy-4'-methoxyisoflavanol = (+)-medicarpin + H2O. It catalyses the reaction (3R,4R)-3-(6-hydroxy-1,3-benzodioxol-5-yl)-3,4-dihydro-2H-chromene-4,7-diol = (-)-maackiain + H2O. The enzyme catalyses (3R,4R)-7,2',4'-trihydroxyisoflavanol = (6aR,11aR)-3,9-dihydroxypterocarpan + H2O. In terms of biological role, involved in pterocarpan phytoalexin biosynthesis. Catalyzes the last step in the biosynthesis of the phytoalexin medicarpin, and thereby contributes to plant defense reactions. Dirigent proteins impart stereoselectivity on the phenoxy radical-coupling reaction, yielding optically active lignans from two molecules of coniferyl alcohol in the biosynthesis of lignans, flavonolignans, and alkaloids and thus plays a central role in plant secondary metabolism. This Glycyrrhiza echinata (Licorice) protein is Pterocarpan synthase 1.